Consider the following 162-residue polypeptide: Protein-export protein SecB (162 aa).

The protein belongs to the SecB family. In terms of assembly, homotetramer, a dimer of dimers. One homotetramer interacts with 1 SecA dimer.

The protein resides in the cytoplasm. In terms of biological role, one of the proteins required for the normal export of preproteins out of the cell cytoplasm. It is a molecular chaperone that binds to a subset of precursor proteins, maintaining them in a translocation-competent state. It also specifically binds to its receptor SecA. The polypeptide is Protein-export protein SecB (Pseudoalteromonas translucida (strain TAC 125)).